The primary structure comprises 556 residues: MNPSTTQARVVVDELIRGGVRDVVLCPGSRNAPLAFALQDADHAGRIRLHVRIDERTAGYLAIGLAVAAGAPVCVAMTSGTAVANLGPAVVEANYARVPLIVLSANRPYELLGTGANQTMEQLGYFGTQVRAAISLGLAEDAPERLDSLNATWRSATCRVLVAATGSRTANAGPVQFDIPLREPLIPDPEPHGAITPQGRPGGKPWTYIPQVTFDQPLEIDLSADTVVIAGHGAGVHPNLTELPIVAEPTAPFGPYRPYPLHPLALPLLHPKQVIMLGRPTLHRPVSALLADPQVPVYALTTGPCWPDVSGNSQAAGTRAVTTGTPHPAWLQRCAEMNQHAISTVRSQLAAHPLITGLHVAAAVADALRPGDQLVLGASNPVRDMALVGLSTDGIQVRSNRGVAGIDGTVSTAIGAALAYERSPGYAGSTDRPARTVALIGDLAFVHDSSGLLIGPTEPTPQQLKIVVSNDNGGGIFELLEQGDPRLSAVSSRIFGTPHDVDVGALCRAYHVEGRQIEVDKLREALDEPGVGMRVLEVKADRSSLRQLHAAITATL.

It belongs to the TPP enzyme family. MenD subfamily. In terms of assembly, homodimer. The cofactor is Mg(2+). It depends on Mn(2+) as a cofactor. Requires thiamine diphosphate as cofactor.

The catalysed reaction is isochorismate + 2-oxoglutarate + H(+) = 5-enolpyruvoyl-6-hydroxy-2-succinyl-cyclohex-3-ene-1-carboxylate + CO2. It participates in quinol/quinone metabolism; 1,4-dihydroxy-2-naphthoate biosynthesis; 1,4-dihydroxy-2-naphthoate from chorismate: step 2/7. The protein operates within quinol/quinone metabolism; menaquinone biosynthesis. Catalyzes the thiamine diphosphate-dependent decarboxylation of 2-oxoglutarate and the subsequent addition of the resulting succinic semialdehyde-thiamine pyrophosphate anion to isochorismate to yield 2-succinyl-5-enolpyruvyl-6-hydroxy-3-cyclohexene-1-carboxylate (SEPHCHC). The chain is 2-succinyl-5-enolpyruvyl-6-hydroxy-3-cyclohexene-1-carboxylate synthase from Mycobacterium leprae (strain Br4923).